The sequence spans 225 residues: UPF0758 protein BAV2405 (225 aa).

In terms of domain architecture, MPN spans 103–225; the sequence is AMKHPEEVRR…ALSMAERGLI (123 aa). Positions 174, 176, and 187 each coordinate Zn(2+). The short motif at 174-187 is the JAMM motif element; that stretch reads HNHPSGNPQPSAAD.

The protein belongs to the UPF0758 family.

The polypeptide is UPF0758 protein BAV2405 (Bordetella avium (strain 197N)).